A 151-amino-acid polypeptide reads, in one-letter code: Transcriptional regulator MraZ (151 aa).

2 consecutive SpoVT-AbrB domains span residues 5-52 (ANAV…PLDE) and 81-124 (AVDL…DEDA).

This sequence belongs to the MraZ family. Forms oligomers.

Its subcellular location is the cytoplasm. It is found in the nucleoid. This Pseudomonas putida (strain W619) protein is Transcriptional regulator MraZ.